The following is an 88-amino-acid chain: MANIKSQIKRNKTNEKARLRNKAVKSSLKTAIRKAREAAAAGDVEKATEYQRAAARQLDKAVSKGVIHKNQAANKKSALASKVAPLKG.

The disordered stretch occupies residues Met-1–Leu-28.

It belongs to the bacterial ribosomal protein bS20 family.

Binds directly to 16S ribosomal RNA. This is Small ribosomal subunit protein bS20 from Streptomyces avermitilis (strain ATCC 31267 / DSM 46492 / JCM 5070 / NBRC 14893 / NCIMB 12804 / NRRL 8165 / MA-4680).